The sequence spans 175 residues: Large ribosomal subunit protein uL10 (175 aa).

The protein belongs to the universal ribosomal protein uL10 family. Part of the ribosomal stalk of the 50S ribosomal subunit. The N-terminus interacts with L11 and the large rRNA to form the base of the stalk. The C-terminus forms an elongated spine to which L12 dimers bind in a sequential fashion forming a multimeric L10(L12)X complex.

Its function is as follows. Forms part of the ribosomal stalk, playing a central role in the interaction of the ribosome with GTP-bound translation factors. The polypeptide is Large ribosomal subunit protein uL10 (Pelotomaculum thermopropionicum (strain DSM 13744 / JCM 10971 / SI)).